The primary structure comprises 322 residues: SUMO-activating enzyme subunit 1A (322 aa).

Met1 is modified (N-acetylmethionine).

It belongs to the ubiquitin-activating E1 family. Heterodimer of SAE1A or SAE1B and SAE2. The complex binds SUMO proteins via SAE2.

The protein resides in the nucleus. The protein operates within protein modification; protein sumoylation. Functionally, the dimeric enzyme acts as an E1 ligase for SUMO1 and SUMO2. It mediates ATP-dependent activation of SUMO proteins and formation of a thioester with a conserved cysteine residue on SAE2. Functionally redundant with its paralog SAE1B. This Arabidopsis thaliana (Mouse-ear cress) protein is SUMO-activating enzyme subunit 1A (SAE1A).